The sequence spans 291 residues: Ribonuclease Z (291 aa).

Zn(2+)-binding residues include His61, His63, Asp65, His66, His133, Asp201, and His257. The active-site Proton acceptor is the Asp65.

Belongs to the RNase Z family. In terms of assembly, homodimer. The cofactor is Zn(2+).

The enzyme catalyses Endonucleolytic cleavage of RNA, removing extra 3' nucleotides from tRNA precursor, generating 3' termini of tRNAs. A 3'-hydroxy group is left at the tRNA terminus and a 5'-phosphoryl group is left at the trailer molecule.. Zinc phosphodiesterase, which displays some tRNA 3'-processing endonuclease activity. Probably involved in tRNA maturation, by removing a 3'-trailer from precursor tRNA. This is Ribonuclease Z from Saccharolobus islandicus (strain Y.N.15.51 / Yellowstone #2) (Sulfolobus islandicus).